Here is a 390-residue protein sequence, read N- to C-terminus: MAAALRLTPHMRQAYPVVAAPSVARLSTLDASKLTIETTTQPRERVEKTKLVFGHTFSDHMLKCKWDVNEGWAAPTISPYANLSLAPSSIVLHYAIECFEGMKAFRGDDDRIRLFRPNLNMDRLHRSSVRLALPDFDQDELLKCITELVIKDKDWIPAGRGYSLYLRPTHIGTAEYLGVGKSSSSLLFCINSPSGAYYSTGFKPVSLLADPAYVRAWPGGVGNTKGGCNYAPSIYPQSQAQAQGCQQVLWLFGEDHEVTEVGTMNLFMYWKNEQGEDELITPPLDGTILPGVTRQSIVDMARGWNEFKVSERKFNMGQVSRALKEGRVYEMFGAGTAATVCPIGQIKYLGEDLNVPLALGNSGELTNRIWTDIFDIQYGAVEHEWAPVIA.

Lys225 bears the N6-(pyridoxal phosphate)lysine mark.

It belongs to the class-IV pyridoxal-phosphate-dependent aminotransferase family. As to quaternary structure, homodimer. The cofactor is pyridoxal 5'-phosphate.

The enzyme catalyses L-leucine + 2-oxoglutarate = 4-methyl-2-oxopentanoate + L-glutamate. It carries out the reaction L-isoleucine + 2-oxoglutarate = (S)-3-methyl-2-oxopentanoate + L-glutamate. The catalysed reaction is L-valine + 2-oxoglutarate = 3-methyl-2-oxobutanoate + L-glutamate. In terms of biological role, catalyzes the first reaction in the catabolism of the essential branched chain amino acids leucine, isoleucine, and valine. The protein is Branched-chain-amino-acid aminotransferase of Monosiga brevicollis (Choanoflagellate).